The sequence spans 172 residues: MDLRKKIRIVEDFPIKGISFKDVTPILKDPKAMKHTTKEITKYLEDKNIDIIVGPEARGFLFGVPVAHELDIGFVPVRKPGKLPFKTFSVDYALEYGTDKLEIHSDGIEKGQNVAIVDDLLATGGTVSGVSKLVEKIGGHVSALNFVIELTELKGRDKLKGYDIQSLVKYDL.

Belongs to the purine/pyrimidine phosphoribosyltransferase family. Homodimer.

Its subcellular location is the cytoplasm. The catalysed reaction is AMP + diphosphate = 5-phospho-alpha-D-ribose 1-diphosphate + adenine. It participates in purine metabolism; AMP biosynthesis via salvage pathway; AMP from adenine: step 1/1. Its function is as follows. Catalyzes a salvage reaction resulting in the formation of AMP, that is energically less costly than de novo synthesis. In Methanococcus maripaludis (strain C7 / ATCC BAA-1331), this protein is Adenine phosphoribosyltransferase.